We begin with the raw amino-acid sequence, 492 residues long: Catalase isozyme 1 (492 aa).

Active-site residues include H65 and N138. Position 348 (Y348) interacts with heme.

It belongs to the catalase family. In terms of assembly, homotetramer. Heme serves as cofactor. In terms of tissue distribution, scutella, milky endosperm of immature kernels, leaves and epicotyls.

The protein localises to the peroxisome. It catalyses the reaction 2 H2O2 = O2 + 2 H2O. In terms of biological role, occurs in almost all aerobically respiring organisms and serves to protect cells from the toxic effects of hydrogen peroxide. The sequence is that of Catalase isozyme 1 (CAT1) from Zea mays (Maize).